Here is a 519-residue protein sequence, read N- to C-terminus: Chaperone SurA (519 aa).

A signal peptide spans 1 to 31 (MMRSLHSLRRMSGTVLALMLAAGLPLSAAQA). 2 stretches are compositionally biased toward low complexity: residues 31–45 (AQPAKPAPKGDQKPA) and 197–207 (PAAAQATRAPA). 2 disordered regions span residues 31 to 50 (AQPAKPAPKGDQKPATPAPS) and 196 to 221 (NPAAAQATRAPAPQQPQPQPRQPAQS). The PpiC 1 domain maps to 223 to 324 (PAMLVLAQIL…NGFHILKVVD (102 aa)). Positions 328 to 361 (GGQPAQAARPAPAPAPQQPSSFQEGPSVAAPQGP) are disordered. The 100-residue stretch at 364–463 (VTQTHARHIL…FGWHLIQVLE (100 aa)) folds into the PpiC 2 domain.

Its subcellular location is the periplasm. It carries out the reaction [protein]-peptidylproline (omega=180) = [protein]-peptidylproline (omega=0). In terms of biological role, chaperone involved in the correct folding and assembly of outer membrane proteins. Recognizes specific patterns of aromatic residues and the orientation of their side chains, which are found more frequently in integral outer membrane proteins. May act in both early periplasmic and late outer membrane-associated steps of protein maturation. In Bordetella bronchiseptica (strain ATCC BAA-588 / NCTC 13252 / RB50) (Alcaligenes bronchisepticus), this protein is Chaperone SurA.